We begin with the raw amino-acid sequence, 287 residues long: Orotidine 5'-phosphate decarboxylase (287 aa).

Catalysis depends on K97, which acts as the Proton donor.

The protein belongs to the OMP decarboxylase family. Type 2 subfamily.

The enzyme catalyses orotidine 5'-phosphate + H(+) = UMP + CO2. It participates in pyrimidine metabolism; UMP biosynthesis via de novo pathway; UMP from orotate: step 2/2. This is Orotidine 5'-phosphate decarboxylase from Clostridium perfringens (strain SM101 / Type A).